The chain runs to 179 residues: Large ribosomal subunit protein bL27c (179 aa).

The transit peptide at Met1–Ser51 directs the protein to the chloroplast.

The protein belongs to the bacterial ribosomal protein bL27 family. In terms of assembly, part of the 50S ribosomal subunit.

It is found in the plastid. Its subcellular location is the chloroplast. The sequence is that of Large ribosomal subunit protein bL27c (RPL27) from Nicotiana tabacum (Common tobacco).